Here is a 343-residue protein sequence, read N- to C-terminus: Protein SOSEKI 4 (343 aa).

The segment at 18–109 (RIVPVVYYLS…YVLKGSQILD (92 aa)) is DIX-like oligomerization domain. Residues 148 to 194 (RKLSMDASTQTDDRRRRKSPVDEVNEVTELSREEITSPPQSDSSPET) are disordered. Residues 184 to 194 (SPPQSDSSPET) show a composition bias toward polar residues. An Association to cell membranes motif is present at residues 233-234 (CG).

It belongs to the SOSEKI family. In terms of assembly, homodimer. Forms long polymer filaments with other SOKs proteins polymers (e.g. SOK1, SOK2, SOK3 and SOK4) crucial for polar localization and biological activity. Binds to ANGUSTIFOLIA (AN). As to expression, expressed during embryogenesis and in roots.

It is found in the cell membrane. SOSEKI proteins (SOK1-5) locally interpret global polarity cues and can influence cell division orientation to coordinate cell polarization relative to body axes, probably by guiding ANGUSTIFOLIA (AN) polarized localization. Positive regulator of auxin (indole-3-acetic acid, IAA) biosynthesis and signaling pathway leading to the modulation of seedling growth, plant and inflorescence development. Negative regulator of stress responses (e.g. salinity and osmotic stress). In Arabidopsis thaliana (Mouse-ear cress), this protein is Protein SOSEKI 4.